Consider the following 116-residue polypeptide: Large ribosomal subunit protein bL20 (116 aa).

This sequence belongs to the bacterial ribosomal protein bL20 family.

Binds directly to 23S ribosomal RNA and is necessary for the in vitro assembly process of the 50S ribosomal subunit. It is not involved in the protein synthesizing functions of that subunit. This chain is Large ribosomal subunit protein bL20, found in Helicobacter pylori (strain Shi470).